The primary structure comprises 692 residues: Elongation factor G (692 aa).

One can recognise a tr-type G domain in the interval 8–283 (EKVRNIGIAA…AVVDYLPAPT (276 aa)). GTP is bound by residues 17–24 (AHIDAGKT), 81–85 (DTPGH), and 135–138 (NKMD).

This sequence belongs to the TRAFAC class translation factor GTPase superfamily. Classic translation factor GTPase family. EF-G/EF-2 subfamily.

The protein resides in the cytoplasm. Catalyzes the GTP-dependent ribosomal translocation step during translation elongation. During this step, the ribosome changes from the pre-translocational (PRE) to the post-translocational (POST) state as the newly formed A-site-bound peptidyl-tRNA and P-site-bound deacylated tRNA move to the P and E sites, respectively. Catalyzes the coordinated movement of the two tRNA molecules, the mRNA and conformational changes in the ribosome. The protein is Elongation factor G of Nitratiruptor sp. (strain SB155-2).